The chain runs to 225 residues: Cytidylate kinase (225 aa).

11 to 19 provides a ligand contact to ATP; it reads GPAAAGKST.

This sequence belongs to the cytidylate kinase family. Type 1 subfamily.

It is found in the cytoplasm. The enzyme catalyses CMP + ATP = CDP + ADP. The catalysed reaction is dCMP + ATP = dCDP + ADP. The protein is Cytidylate kinase of Bacillus cereus (strain ATCC 10987 / NRS 248).